A 100-amino-acid chain; its full sequence is Integration host factor subunit alpha (100 aa).

The interval 53 to 72 (FQLRDKPQRPGRNPKTGEEV) is disordered.

It belongs to the bacterial histone-like protein family. In terms of assembly, heterodimer of an alpha and a beta chain.

Functionally, this protein is one of the two subunits of integration host factor, a specific DNA-binding protein that functions in genetic recombination as well as in transcriptional and translational control. The polypeptide is Integration host factor subunit alpha (Neisseria gonorrhoeae (strain ATCC 700825 / FA 1090)).